We begin with the raw amino-acid sequence, 273 residues long: Anthranilate synthase beta subunit 2, chloroplastic (273 aa).

The N-terminal 36 residues, 1-36 (MAATTLYNSCLLQPKYGFTTRRLNQSLVNSLTNPTR), are a transit peptide targeting the chloroplast. A Glutamine amidotransferase type-1 domain is found at 71-270 (PIIVIDNYDS…IKLVEKKESE (200 aa)). Catalysis depends on Cys-149, which acts as the Nucleophile. Active-site residues include His-244 and Glu-246.

Heterotetramer consisting of two non-identical subunits: a beta subunit and a large alpha subunit.

The protein resides in the plastid. It localises to the chloroplast. The catalysed reaction is chorismate + L-glutamine = anthranilate + pyruvate + L-glutamate + H(+). The protein operates within amino-acid biosynthesis; L-tryptophan biosynthesis; L-tryptophan from chorismate: step 1/5. Its activity is regulated as follows. Feedback inhibition by tryptophan. Its function is as follows. Part of a heterotetrameric complex that catalyzes the two-step biosynthesis of anthranilate, an intermediate in the biosynthesis of L-tryptophan. In the first step, the glutamine-binding beta subunit of anthranilate synthase (AS) provides the glutamine amidotransferase activity which generates ammonia as a substrate that, along with chorismate, is used in the second step, catalyzed by the large alpha subunit of AS to produce anthranilate. This Arabidopsis thaliana (Mouse-ear cress) protein is Anthranilate synthase beta subunit 2, chloroplastic (ASB2).